The chain runs to 461 residues: Serine incorporator 5 (461 aa).

Residues 1 to 36 are Extracellular-facing; the sequence is MSARCCAGQLACCCGSAGCSLCCGCCPKFRQSRTTR. Residues 37–57 form a helical membrane-spanning segment; the sequence is FMYLFYFILVIALCCVMMTPS. At 58 to 90 the chain is on the cytoplasmic side; it reads VMKQVKDHIPFFEEFCKKTQAGGDACENLVGYS. Residues 91-111 traverse the membrane as a helical segment; it reads AVYRVCFGMACFFALFCLLTL. Topologically, residues 112–125 are extracellular; that stretch reads KVNNSKSCRAYIHN. Asparagine 114 carries an N-linked (GlcNAc...) asparagine glycan. Residues 126-146 traverse the membrane as a helical segment; it reads GFWFFKLLLLGAMCSGAFFIP. Over 147–157 the chain is Cytoplasmic; it reads DQETFLKVWRY. The helical transmembrane segment at 158 to 178 threads the bilayer; the sequence is VGAGGSFLFICIQLLLIVQFA. The Extracellular segment spans residues 179–200; sequence HKWNKNWTAGTVRNKLWYASLS. N-linked (GlcNAc...) asparagine glycosylation is present at asparagine 184. A helical membrane pass occupies residues 201–221; it reads LVTLIMYSVAVGGLALMAVFY. Over 222–231 the chain is Cytoplasmic; it reads TQWDDCMDNK. Residues 232–252 form a helical membrane-spanning segment; the sequence is ILLGVHGGLCVLISLVAISPC. Over 253 to 260 the chain is Extracellular; sequence VQNRQPHS. The chain crosses the membrane as a helical span at residues 261–281; it reads GLLQSGLISCYVTYLTFSALT. Residues 282–312 are Cytoplasmic-facing; that stretch reads SKPEKKVLDEHGKNVTICAPDFGQDLHRDEN. The helical transmembrane segment at 313–333 threads the bilayer; the sequence is MVTWLGTLLLIVCISYSCLTS. The Extracellular segment spans residues 334 to 392; that stretch reads TTRSSSDALQSRYGAPELEVARCCFCFGPDGEDTEEQQNVKKGPRVIYDEKKGTVYSYS. A helical membrane pass occupies residues 393 to 413; it reads YFHFVFFLASLYVMMTLTSWF. The Cytoplasmic portion of the chain corresponds to 414-422; the sequence is HYENATIKT. A helical transmembrane segment spans residues 423–443; it reads FFSGWSVFWVKMASCWMCVLL. The Extracellular segment spans residues 444-461; sequence YLQTLVAPLCCPSRQFSV.

It belongs to the TDE1 family.

It localises to the cell membrane. It carries out the reaction a 1,2-diacyl-sn-glycero-3-phospho-L-serine(in) = a 1,2-diacyl-sn-glycero-3-phospho-L-serine(out). The enzyme catalyses a 1,2-diacyl-sn-glycero-3-phosphocholine(in) = a 1,2-diacyl-sn-glycero-3-phosphocholine(out). The catalysed reaction is a 1,2-diacyl-sn-glycero-3-phosphoethanolamine(in) = a 1,2-diacyl-sn-glycero-3-phosphoethanolamine(out). Its function is as follows. Restriction factor required to restrict infectivity of gammaretroviruses: acts by inhibiting an early step of viral infection. Impairs the penetration of the viral particle into the cytoplasm. Non-ATP-dependent, non-specific lipid transporter for phosphatidylserine, phosphatidylcholine, and phosphatidylethanolamine. Functions as a scramblase that flips lipids in both directions across the membrane. Phospholipid scrambling results in gammaretroviral surface exposure of phosphatidylserine and loss of membrane asymmetry, which leads to loss of infectivity. Enhances the incorporation of serine into phosphatidylserine and sphingolipids. May play a role in providing serine molecules for the formation of myelin glycosphingolipids in oligodendrocytes. This Mus musculus (Mouse) protein is Serine incorporator 5 (Serinc5).